The chain runs to 157 residues: Dihydrofolate reductase type 15 (157 aa).

Residues 2-156 (KLSLMAAISK…INYSYQIWQK (155 aa)) enclose the DHFR domain.

This sequence belongs to the dihydrofolate reductase family. In terms of assembly, homodimer.

It catalyses the reaction (6S)-5,6,7,8-tetrahydrofolate + NADP(+) = 7,8-dihydrofolate + NADPH + H(+). Its pathway is cofactor biosynthesis; tetrahydrofolate biosynthesis; 5,6,7,8-tetrahydrofolate from 7,8-dihydrofolate: step 1/1. Its function is as follows. Key enzyme in folate metabolism. Catalyzes an essential reaction for de novo glycine and purine synthesis, and for DNA precursor synthesis. The polypeptide is Dihydrofolate reductase type 15 (dhfrXV) (Escherichia coli).